Here is a 119-residue protein sequence, read N- to C-terminus: NAD(P)H-quinone oxidoreductase subunit M (119 aa).

The protein belongs to the complex I NdhM subunit family. As to quaternary structure, NDH-1 can be composed of about 15 different subunits; different subcomplexes with different compositions have been identified which probably have different functions.

It localises to the cellular thylakoid membrane. It carries out the reaction a plastoquinone + NADH + (n+1) H(+)(in) = a plastoquinol + NAD(+) + n H(+)(out). It catalyses the reaction a plastoquinone + NADPH + (n+1) H(+)(in) = a plastoquinol + NADP(+) + n H(+)(out). In terms of biological role, NDH-1 shuttles electrons from an unknown electron donor, via FMN and iron-sulfur (Fe-S) centers, to quinones in the respiratory and/or the photosynthetic chain. The immediate electron acceptor for the enzyme in this species is believed to be plastoquinone. Couples the redox reaction to proton translocation, and thus conserves the redox energy in a proton gradient. Cyanobacterial NDH-1 also plays a role in inorganic carbon-concentration. The chain is NAD(P)H-quinone oxidoreductase subunit M from Gloeothece citriformis (strain PCC 7424) (Cyanothece sp. (strain PCC 7424)).